The sequence spans 592 residues: Cell division protein FtsZ (592 aa).

GTP-binding positions include 24-28 (GGGGN), 111-113 (GTG), E142, R146, and D190. The segment at 333 to 362 (KFQKSVSSVRKNDSGINQTASHPQSSQLRS) is disordered.

The protein belongs to the FtsZ family. As to quaternary structure, homodimer. Polymerizes to form a dynamic ring structure in a strictly GTP-dependent manner. Interacts directly with several other division proteins.

The protein localises to the cytoplasm. Functionally, essential cell division protein that forms a contractile ring structure (Z ring) at the future cell division site. The regulation of the ring assembly controls the timing and the location of cell division. One of the functions of the FtsZ ring is to recruit other cell division proteins to the septum to produce a new cell wall between the dividing cells. Binds GTP and shows GTPase activity. This chain is Cell division protein FtsZ, found in Bartonella bacilliformis.